Consider the following 202-residue polypeptide: Small ribosomal subunit protein uS4 (202 aa).

The span at 1–13 shows a compositional bias: basic residues; the sequence is MSRYRGPRLRVTR. The segment at 1–42 is disordered; sequence MSRYRGPRLRVTRRLGELPGLTRKASKKSNPPGQHGQARRKR. The S4 RNA-binding domain occupies 90–152; the sequence is NRLDNVCFRL…KASKKLVEGN (63 aa).

Belongs to the universal ribosomal protein uS4 family. In terms of assembly, part of the 30S ribosomal subunit. Contacts protein S5. The interaction surface between S4 and S5 is involved in control of translational fidelity.

In terms of biological role, one of the primary rRNA binding proteins, it binds directly to 16S rRNA where it nucleates assembly of the body of the 30S subunit. Functionally, with S5 and S12 plays an important role in translational accuracy. The polypeptide is Small ribosomal subunit protein uS4 (Prochlorococcus marinus (strain MIT 9515)).